A 255-amino-acid chain; its full sequence is Triosephosphate isomerase (255 aa).

A substrate-binding site is contributed by 9–11 (NWK). His-95 serves as the catalytic Electrophile. The active-site Proton acceptor is the Glu-167. Residues Gly-173, Ser-212, and 233–234 (GG) contribute to the substrate site.

Belongs to the triosephosphate isomerase family. As to quaternary structure, homodimer.

It localises to the cytoplasm. It carries out the reaction D-glyceraldehyde 3-phosphate = dihydroxyacetone phosphate. It functions in the pathway carbohydrate biosynthesis; gluconeogenesis. It participates in carbohydrate degradation; glycolysis; D-glyceraldehyde 3-phosphate from glycerone phosphate: step 1/1. Involved in the gluconeogenesis. Catalyzes stereospecifically the conversion of dihydroxyacetone phosphate (DHAP) to D-glyceraldehyde-3-phosphate (G3P). This chain is Triosephosphate isomerase, found in Salmonella dublin (strain CT_02021853).